The sequence spans 594 residues: Arginine--tRNA ligase (594 aa).

The 'HIGH' region signature appears at 139-149 (ANPTGPLHVGH).

This sequence belongs to the class-I aminoacyl-tRNA synthetase family. As to quaternary structure, monomer.

It is found in the cytoplasm. It carries out the reaction tRNA(Arg) + L-arginine + ATP = L-arginyl-tRNA(Arg) + AMP + diphosphate. The polypeptide is Arginine--tRNA ligase (Burkholderia mallei (strain NCTC 10247)).